The following is a 374-amino-acid chain: Chaperone protein DnaJ (374 aa).

The region spanning Asp5–Gly70 is the J domain. The segment at Gly129 to Glu207 adopts a CR-type zinc-finger fold. Residues Cys142, Cys145, Cys159, Cys162, Cys181, Cys184, Cys195, and Cys198 each coordinate Zn(2+). 4 CXXCXGXG motif repeats span residues Cys142–Gly149, Cys159–Gly166, Cys181–Gly188, and Cys195–Gly202. Residues Pro216 to Pro238 are disordered.

The protein belongs to the DnaJ family. Homodimer. Zn(2+) is required as a cofactor.

Its subcellular location is the cytoplasm. Functionally, participates actively in the response to hyperosmotic and heat shock by preventing the aggregation of stress-denatured proteins and by disaggregating proteins, also in an autonomous, DnaK-independent fashion. Unfolded proteins bind initially to DnaJ; upon interaction with the DnaJ-bound protein, DnaK hydrolyzes its bound ATP, resulting in the formation of a stable complex. GrpE releases ADP from DnaK; ATP binding to DnaK triggers the release of the substrate protein, thus completing the reaction cycle. Several rounds of ATP-dependent interactions between DnaJ, DnaK and GrpE are required for fully efficient folding. Also involved, together with DnaK and GrpE, in the DNA replication of plasmids through activation of initiation proteins. The protein is Chaperone protein DnaJ of Marinobacter nauticus (strain ATCC 700491 / DSM 11845 / VT8) (Marinobacter aquaeolei).